We begin with the raw amino-acid sequence, 302 residues long: Meiotically up-regulated gene 129 protein (302 aa).

Functionally, has a role in meiosis. In Schizosaccharomyces pombe (strain 972 / ATCC 24843) (Fission yeast), this protein is Meiotically up-regulated gene 129 protein (mug129).